We begin with the raw amino-acid sequence, 133 residues long: UPF0225 protein BB3385 (133 aa).

Belongs to the UPF0225 family.

This is UPF0225 protein BB3385 from Bordetella bronchiseptica (strain ATCC BAA-588 / NCTC 13252 / RB50) (Alcaligenes bronchisepticus).